We begin with the raw amino-acid sequence, 194 residues long: Peptidyl-tRNA hydrolase (194 aa).

Tyrosine 16 serves as a coordination point for tRNA. The Proton acceptor role is filled by histidine 21. Residues tyrosine 67, asparagine 69, and asparagine 115 each coordinate tRNA.

It belongs to the PTH family. Monomer.

The protein resides in the cytoplasm. It catalyses the reaction an N-acyl-L-alpha-aminoacyl-tRNA + H2O = an N-acyl-L-amino acid + a tRNA + H(+). Hydrolyzes ribosome-free peptidyl-tRNAs (with 1 or more amino acids incorporated), which drop off the ribosome during protein synthesis, or as a result of ribosome stalling. In terms of biological role, catalyzes the release of premature peptidyl moieties from peptidyl-tRNA molecules trapped in stalled 50S ribosomal subunits, and thus maintains levels of free tRNAs and 50S ribosomes. The chain is Peptidyl-tRNA hydrolase from Synechocystis sp. (strain ATCC 27184 / PCC 6803 / Kazusa).